Here is a 104-residue protein sequence, read N- to C-terminus: Phosphoribosyl-ATP pyrophosphatase (104 aa).

It belongs to the PRA-PH family.

Its subcellular location is the cytoplasm. It carries out the reaction 1-(5-phospho-beta-D-ribosyl)-ATP + H2O = 1-(5-phospho-beta-D-ribosyl)-5'-AMP + diphosphate + H(+). It participates in amino-acid biosynthesis; L-histidine biosynthesis; L-histidine from 5-phospho-alpha-D-ribose 1-diphosphate: step 2/9. This is Phosphoribosyl-ATP pyrophosphatase from Streptococcus thermophilus (strain ATCC BAA-491 / LMD-9).